Reading from the N-terminus, the 674-residue chain is Pannexin-2 (674 aa).

Residues 11 to 53 (MATALLAGEKLRELILPGSQDDKAGALAALLLQLKLELPFDRV) are Cytoplasmic-facing. Residues 54-74 (VTIGTVLVPILLVTLVFTKNF) traverse the membrane as a helical segment. Residues 75–125 (AEEPIYCYTPHNFTRDQALYARGYCWTELRDALPGVDASLWPSLFEHKFLP) lie on the Extracellular side of the membrane. The N-linked (GlcNAc...) asparagine glycan is linked to Asn-86. A helical membrane pass occupies residues 126 to 146 (YALLAFAAIMYVPALGWEFLA). At 147–230 (STRLTSELNF…NFLAKLYLAR (84 aa)) the chain is on the cytoplasmic side. Residues 231-251 (HVLILLLSVVPISYLCTYYAT) traverse the membrane as a helical segment. The Extracellular portion of the chain corresponds to 252–295 (QKQNEFTCALGASPDGPVGSAGPTVRVSCKLPSVQLQRIIAGVD). The helical transmembrane segment at 296-316 (IVLLCFMNLIILVNLIHLFIF) threads the bilayer. Topologically, residues 317 to 674 (RKSNFIFDKL…PRTVVSTVEF (358 aa)) are cytoplasmic. Residues 394-408 (TTPTVRDSGIQTVDP) show a composition bias toward polar residues. 2 disordered regions span residues 394–426 (TTPTVRDSGIQTVDPSINPAEPEGSAEPPVVKR) and 485–510 (AHHYKGSGGDTGPSSAPPAASEKKHT). Phosphoserine occurs at positions 590 and 601.

It belongs to the pannexin family. Forms PANX1/PANX2-heteromeric intercellular channels on coexpression in paired Xenopus oocytes. Does not form homomeric channels. S-palmitoylated in neural stem and progenitor cells. Post-translationally, cleaved by CASP3 and CASP7 during apoptosis. Cleavage has no effect on it function. As to expression, expressed in the eye, thyroid, prostate, kidney and liver. Abundantly expressed in the CNS, including hippocampus, olfactory bulb, cortex, cerebellum. Not detected in the white matter.

It is found in the cell membrane. It localises to the golgi apparatus membrane. The protein resides in the endoplasmic reticulum membrane. Structural component of the gap junctions and the hemichannels. This chain is Pannexin-2 (Panx2), found in Rattus norvegicus (Rat).